We begin with the raw amino-acid sequence, 359 residues long: MRQSRRASSRVNRLVVIFIIVASGFLLLYKNTQQFTQIDRECIQDEWQENNNLGNTIDDGSNFRIAFTDIQQNYTWLHLPNFLENSEILMIVSSNCDNFARRNILRKTWMNPENSQIIGDGRMKALFLVGINGADEKLNAVVLEEAKVFGDMIVIDLEDNYLNLSYKTISLLLYSISKTKSPNLIGKIDEDVLFYPDQLTPLINDKTINTSTFSIYGEKYEAGVAVNHGEDNAKWQISKNSFKCSVYPSYLSGPTYFLTRKAAKRIVEATKHRKFISVDVEDVFITGLLAGDVGIKKNQLPFMYMIEEATNDRESYEILAWHTKKRDQQYIEAFESLKLNRCKSCRKSKNPDLEELKEK.

At 1 to 11 (MRQSRRASSRV) the chain is on the cytoplasmic side. A helical; Signal-anchor for type II membrane protein membrane pass occupies residues 12–29 (NRLVVIFIIVASGFLLLY). The Lumenal portion of the chain corresponds to 30-359 (KNTQQFTQID…NPDLEELKEK (330 aa)). Residues N73, N163, and N209 are each glycosylated (N-linked (GlcNAc...) asparagine).

This sequence belongs to the glycosyltransferase 31 family.

The protein resides in the golgi apparatus membrane. It participates in protein modification; protein glycosylation. Transfers N-acetylgalactosamine onto carbohydrate substrates. Involved in susceptibility to pore-forming crystal toxins in conjunction with bre-1, bre-3, bre-4, and bre-5. Involved in resistance to the nematotoxic C.cinerea galectin Cgl2. The chain is Beta-1,3-galactosyltransferase bre-2 from Caenorhabditis elegans.